The sequence spans 355 residues: 3-dehydroquinate synthase (355 aa).

Residues 71–76, 105–109, 129–130, lysine 142, lysine 151, and 169–172 contribute to the NAD(+) site; these read EGEASK, GVVGD, TS, and TLKT. The Zn(2+) site is built by glutamate 184, histidine 246, and histidine 263.

It belongs to the sugar phosphate cyclases superfamily. Dehydroquinate synthase family. It depends on Co(2+) as a cofactor. Requires Zn(2+) as cofactor. The cofactor is NAD(+).

It localises to the cytoplasm. The catalysed reaction is 7-phospho-2-dehydro-3-deoxy-D-arabino-heptonate = 3-dehydroquinate + phosphate. It functions in the pathway metabolic intermediate biosynthesis; chorismate biosynthesis; chorismate from D-erythrose 4-phosphate and phosphoenolpyruvate: step 2/7. Catalyzes the conversion of 3-deoxy-D-arabino-heptulosonate 7-phosphate (DAHP) to dehydroquinate (DHQ). The polypeptide is 3-dehydroquinate synthase (Streptococcus suis (strain 98HAH33)).